A 131-amino-acid chain; its full sequence is MRKTSLLNSNISSVISKMGHTDMLAIGDCGLPIPKETERIDLALIKGVPGFIETLKAILEELQVEEVLIAKETEKVSPELFTKIKEIIKDTKITFISHEELKKELKDCKAVVRTGEQTPYANIILKSGVVF.

The Proton donor role is filled by His-20. Substrate contacts are provided by residues Asp-28, His-98, and 120-122; that span reads YAN.

Belongs to the RbsD / FucU family. RbsD subfamily. In terms of assembly, homodecamer.

Its subcellular location is the cytoplasm. The catalysed reaction is beta-D-ribopyranose = beta-D-ribofuranose. It participates in carbohydrate metabolism; D-ribose degradation; D-ribose 5-phosphate from beta-D-ribopyranose: step 1/2. Its function is as follows. Catalyzes the interconversion of beta-pyran and beta-furan forms of D-ribose. The protein is D-ribose pyranase of Clostridium perfringens (strain SM101 / Type A).